The sequence spans 509 residues: 2,3-bisphosphoglycerate-independent phosphoglycerate mutase (509 aa).

Mn(2+)-binding residues include Asp14 and Ser64. Ser64 acts as the Phosphoserine intermediate in catalysis. Residues His125, Arg155–Asp156, Arg187, Arg193, Arg259–Arg262, and Lys332 each bind substrate. 5 residues coordinate Mn(2+): Asp399, His403, Asp440, His441, and His459.

The protein belongs to the BPG-independent phosphoglycerate mutase family. Monomer. Requires Mn(2+) as cofactor.

The catalysed reaction is (2R)-2-phosphoglycerate = (2R)-3-phosphoglycerate. Its pathway is carbohydrate degradation; glycolysis; pyruvate from D-glyceraldehyde 3-phosphate: step 3/5. Functionally, catalyzes the interconversion of 2-phosphoglycerate and 3-phosphoglycerate. This Psychromonas ingrahamii (strain DSM 17664 / CCUG 51855 / 37) protein is 2,3-bisphosphoglycerate-independent phosphoglycerate mutase.